The chain runs to 55 residues: Large ribosomal subunit protein bL33 (55 aa).

Belongs to the bacterial ribosomal protein bL33 family.

This Caulobacter sp. (strain K31) protein is Large ribosomal subunit protein bL33.